Here is a 179-residue protein sequence, read N- to C-terminus: Probable F-box protein At3g25550 (179 aa).

The F-box domain occupies 19–55 (IPNDDVLEEIIVRLPVKTLTRFQTVSKHWRHTIKSRN).

The protein is Probable F-box protein At3g25550 of Arabidopsis thaliana (Mouse-ear cress).